The following is a 101-amino-acid chain: Large ribosomal subunit protein uL24 (101 aa).

This sequence belongs to the universal ribosomal protein uL24 family. In terms of assembly, part of the 50S ribosomal subunit.

Functionally, one of two assembly initiator proteins, it binds directly to the 5'-end of the 23S rRNA, where it nucleates assembly of the 50S subunit. Its function is as follows. One of the proteins that surrounds the polypeptide exit tunnel on the outside of the subunit. The polypeptide is Large ribosomal subunit protein uL24 (Streptococcus pneumoniae (strain ATCC 700669 / Spain 23F-1)).